Reading from the N-terminus, the 459-residue chain is Putrescine aminotransferase (459 aa).

Pyridoxal 5'-phosphate is bound by residues Gly150–Thr151 and Gln274. Lys300 carries the N6-(pyridoxal phosphate)lysine modification. Thr332 provides a ligand contact to pyridoxal 5'-phosphate.

This sequence belongs to the class-III pyridoxal-phosphate-dependent aminotransferase family. Putrescine aminotransferase subfamily. Pyridoxal 5'-phosphate serves as cofactor.

It catalyses the reaction an alkane-alpha,omega-diamine + 2-oxoglutarate = an omega-aminoaldehyde + L-glutamate. The catalysed reaction is putrescine + 2-oxoglutarate = 1-pyrroline + L-glutamate + H2O. It carries out the reaction cadaverine + 2-oxoglutarate = 5-aminopentanal + L-glutamate. It participates in amine and polyamine degradation; putrescine degradation; 4-aminobutanal from putrescine (transaminase route): step 1/1. In terms of biological role, catalyzes the aminotransferase reaction from putrescine to 2-oxoglutarate, leading to glutamate and 4-aminobutanal, which spontaneously cyclizes to form 1-pyrroline. This is the first step in one of two pathways for putrescine degradation, where putrescine is converted into 4-aminobutanoate (gamma-aminobutyrate or GABA) via 4-aminobutanal. Also functions as a cadaverine transaminase in a a L-lysine degradation pathway to succinate that proceeds via cadaverine, glutarate and L-2-hydroxyglutarate. This chain is Putrescine aminotransferase, found in Shigella boydii serotype 4 (strain Sb227).